The primary structure comprises 708 residues: Tryptophan synthase (708 aa).

Residues 1-305 (MEGIKQTFQR…EADIDAQLAA (305 aa)) are tryptophan synthase alpha chain. Active-site proton acceptor residues include Glu-49 and Asp-60. The tryptophan synthase beta chain stretch occupies residues 306 to 708 (LHGTIPKRFG…GPKIGWDLRF (403 aa)). Lys-392 bears the N6-(pyridoxal phosphate)lysine mark.

In the N-terminal section; belongs to the TrpA family. The protein in the C-terminal section; belongs to the TrpB family. The cofactor is pyridoxal 5'-phosphate.

The enzyme catalyses (1S,2R)-1-C-(indol-3-yl)glycerol 3-phosphate + L-serine = D-glyceraldehyde 3-phosphate + L-tryptophan + H2O. Its pathway is amino-acid biosynthesis; L-tryptophan biosynthesis; L-tryptophan from chorismate: step 5/5. This Neurospora crassa (strain ATCC 24698 / 74-OR23-1A / CBS 708.71 / DSM 1257 / FGSC 987) protein is Tryptophan synthase (trp-3).